The sequence spans 376 residues: Lipid-A-disaccharide synthase (376 aa).

The protein belongs to the LpxB family.

It carries out the reaction a lipid X + a UDP-2-N,3-O-bis[(3R)-3-hydroxyacyl]-alpha-D-glucosamine = a lipid A disaccharide + UDP + H(+). It functions in the pathway bacterial outer membrane biogenesis; LPS lipid A biosynthesis. Functionally, condensation of UDP-2,3-diacylglucosamine and 2,3-diacylglucosamine-1-phosphate to form lipid A disaccharide, a precursor of lipid A, a phosphorylated glycolipid that anchors the lipopolysaccharide to the outer membrane of the cell. The polypeptide is Lipid-A-disaccharide synthase (Hydrogenovibrio crunogenus (strain DSM 25203 / XCL-2) (Thiomicrospira crunogena)).